The following is a 268-amino-acid chain: Tryptophan synthase alpha chain (268 aa).

Residues Glu-49 and Asp-60 each act as proton acceptor in the active site.

Belongs to the TrpA family. Tetramer of two alpha and two beta chains.

It carries out the reaction (1S,2R)-1-C-(indol-3-yl)glycerol 3-phosphate + L-serine = D-glyceraldehyde 3-phosphate + L-tryptophan + H2O. It functions in the pathway amino-acid biosynthesis; L-tryptophan biosynthesis; L-tryptophan from chorismate: step 5/5. Functionally, the alpha subunit is responsible for the aldol cleavage of indoleglycerol phosphate to indole and glyceraldehyde 3-phosphate. The polypeptide is Tryptophan synthase alpha chain (Escherichia coli O17:K52:H18 (strain UMN026 / ExPEC)).